A 763-amino-acid polypeptide reads, in one-letter code: Phosphoglycerol transferase I (763 aa).

Transmembrane regions (helical) follow at residues 1-21, 26-46, 77-97, and 108-128; these read MSELLSIALFLASVLIYAWKA, WWFAAILAVLGLFVVLNITLY, ILPGAGIVLALAAVFSALGWV, and FGYSLLALLLALGSVDASPAF.

This sequence belongs to the OpgB family.

Its subcellular location is the cell inner membrane. The catalysed reaction is a phosphatidylglycerol + a membrane-derived-oligosaccharide D-glucose = a 1,2-diacyl-sn-glycerol + a membrane-derived-oligosaccharide 6-(glycerophospho)-D-glucose.. It participates in glycan metabolism; osmoregulated periplasmic glucan (OPG) biosynthesis. Its function is as follows. Transfers a phosphoglycerol residue from phosphatidylglycerol to the membrane-bound nascent glucan backbones. The protein is Phosphoglycerol transferase I of Citrobacter koseri (strain ATCC BAA-895 / CDC 4225-83 / SGSC4696).